The chain runs to 878 residues: Probable outer membrane protein PmpI (878 aa).

An N-terminal signal peptide occupies residues 1–24 (MRPDHMNFCCLCAAILSSTAVLFG). A compositionally biased stretch (low complexity) spans 360 to 371 (SSKESPLPSSLQ). A disordered region spans residues 360–381 (SSKESPLPSSLQASVTSPTPAT). The span at 372–381 (ASVTSPTPAT) shows a compositional bias: polar residues. In terms of domain architecture, Autotransporter spans 602-878 (GGAYLFGTWG…SLDLGTTYRF (277 aa)).

The protein belongs to the PMP outer membrane protein family.

The protein resides in the secreted. The protein localises to the cell wall. It localises to the cell outer membrane. The polypeptide is Probable outer membrane protein PmpI (pmpI) (Chlamydia trachomatis serovar D (strain ATCC VR-885 / DSM 19411 / UW-3/Cx)).